Reading from the N-terminus, the 420-residue chain is DNA primase small subunit (420 aa).

The residue at position 1 (methionine 1) is an N-acetylmethionine. Catalysis depends on residues glutamate 44, aspartate 109, and aspartate 111. Residues aspartate 109 and aspartate 111 each coordinate Mg(2+). Mn(2+) is bound by residues aspartate 109 and aspartate 111. 109-111 (DID) is an a ribonucleoside 5'-triphosphate binding site. Cysteine 121, cysteine 122, cysteine 128, and cysteine 131 together coordinate Zn(2+). Residues 121–131 (CCSSADICPKC) carry the Zinc knuckle motif motif. 160-166 (SGRRGVH) provides a ligand contact to a ribonucleoside 5'-triphosphate. Aspartate 306 serves as a coordination point for Mg(2+). Aspartate 306 provides a ligand contact to Mn(2+). Residues 315-318 (HLLK) and histidine 324 each bind a ribonucleoside 5'-triphosphate. Over residues 363-373 (NEEEKEENEAE) the composition is skewed to acidic residues. The tract at residues 363 to 382 (NEEEKEENEAESDVKHRTRD) is disordered.

This sequence belongs to the eukaryotic-type primase small subunit family. Heterodimer of a catalytic subunit PRIM1 and a regulatory subunit PRIM2, also known as the DNA primase complex. Interacts with PRIM2 (via C-terminus). Component of the alpha DNA polymerase complex (also known as the alpha DNA polymerase-primase complex) consisting of four subunits: the catalytic subunit POLA1, the regulatory subunit POLA2, and the primase complex subunits PRIM1 and PRIM2 respectively. Within the complex, POLA1 directly interacts with PRIM2. Mg(2+) serves as cofactor. The cofactor is Mn(2+).

It catalyses the reaction ssDNA + n NTP = ssDNA/pppN(pN)n-1 hybrid + (n-1) diphosphate.. The presence of the regulatory subunit PRIM2/p58 accelerates the kinetics of initiation and primer extension. Inhibited by arabinose nucleoside derivatives such as fludarabine and vidarabine. In terms of biological role, catalytic subunit of the DNA primase complex and component of the DNA polymerase alpha complex (also known as the alpha DNA polymerase-primase complex - primosome/replisome) which play an essential role in the initiation of DNA synthesis. During the S phase of the cell cycle, the DNA polymerase alpha complex (composed of a catalytic subunit POLA1, an accessory subunit POLA2 and two primase subunits, the catalytic subunit PRIM1 and the regulatory subunit PRIM2) is recruited to DNA at the replicative forks via direct interactions with MCM10 and WDHD1. The primase subunit of the polymerase alpha complex initiates DNA synthesis by oligomerising short RNA primers on both leading and lagging strands. These primers are initially extended by the polymerase alpha catalytic subunit and subsequently transferred to polymerase delta and polymerase epsilon for processive synthesis on the lagging and leading strand, respectively. In the primase complex, both subunits are necessary for the initial di-nucleotide formation, but the extension of the primer depends only on the catalytic subunit. Synthesizes 9-mer RNA primers (also known as the 'unit length' RNA primers). Incorporates only ribonucleotides in the presence of ribo- and deoxy-nucleotide triphosphates (rNTPs, dNTPs). Requires template thymine or cytidine to start the RNA primer synthesis, with an adenine or guanine at its 5'-end. Binds single stranded DNA. The sequence is that of DNA primase small subunit (PRIM1) from Homo sapiens (Human).